Here is an 842-residue protein sequence, read N- to C-terminus: Translation initiation factor IF-2 (842 aa).

Residues 94 to 259 (QRSPEEIQAE…HGFQNPTGPV (166 aa)) form a disordered region. A compositionally biased stretch (basic and acidic residues) spans 96–138 (SPEEIQAEQKRELDERRAAENAARDKVEAEVRQRNEEQARRQA). The span at 139–148 (ADSAVAAPAP) shows a compositional bias: low complexity. Residues 149–159 (AAKPEPAPAAA) are compositionally biased toward pro residues. Low complexity predominate over residues 160–172 (PAPVVADAPASED). 2 stretches are compositionally biased toward basic and acidic residues: residues 173–202 (AAAR…RGEA) and 226–235 (TTDEESDGAR). Basic residues predominate over residues 236–249 (RGRGGKGKLKKRNQ). Residues 342–509 (SRAPVVTVMG…AVLLQAEILE (168 aa)) form the tr-type G domain. Positions 351–358 (GHVDHGKT) are G1. 351-358 (GHVDHGKT) is a GTP binding site. Residues 376–380 (GITQH) are G2. Positions 397–400 (DTPG) are G3. GTP-binding positions include 397-401 (DTPGH) and 451-454 (NKID). Residues 451-454 (NKID) are G4. The tract at residues 487 to 489 (SAK) is G5.

It belongs to the TRAFAC class translation factor GTPase superfamily. Classic translation factor GTPase family. IF-2 subfamily.

The protein resides in the cytoplasm. Its function is as follows. One of the essential components for the initiation of protein synthesis. Protects formylmethionyl-tRNA from spontaneous hydrolysis and promotes its binding to the 30S ribosomal subunits. Also involved in the hydrolysis of GTP during the formation of the 70S ribosomal complex. The protein is Translation initiation factor IF-2 of Pseudomonas putida (strain GB-1).